The chain runs to 527 residues: MLPLTEENKHVAQLLFSSGTCPRCILRFCGVDLPAPYKHPSKELLNELQKFLEPEKPELILEAPNPPLKKIRLHEDGIDNLSEDGKEGVSVTEDESMAEKPSKLRVCNVCLGILQEFCEKGFITKVCQKVEASGFEFTSVVLSVSFPPQLSVREHAAWLLVKQEMGKQSLSLGRNDVVQLKEAYKWITHPLFSEELGVPTDGKSLFEVSVVFAHPETAEDCHFLGEVCRDCFKPAKNKQSVFTRMAVLKALSKIKEEDFLGQFPCPPNSPKTVCTVLEVECTHGAVFVAGRYNKYSRNLPQTPWIIDGERKMESSVEELISDHLLAVFRAESFNFSSSGREDVDVRTLGNGRPFAVELLNPHRVHFTSQEMKELQQTINKSSDKIQVRDLQLVTREAIGHMKEGEEEKTKTYSALIWTNRAIQKKDIGFLDDLKDLKIDQKTPLRVLHRRPLAVRTRAIHSMKTHYLDEHHFRLHLKTQAGTYIKEFVHGDFGRTKPNLGSLMNVTADILELDVESVDVDWPPALDD.

Zn(2+) is bound by residues C21 and C24. A coiled-coil region spans residues 42–87 (KELLNELQKFLEPEKPELILEAPNPPLKKIRLHEDGIDNLSEDGKE). S82 carries the post-translational modification Phosphoserine. Residues C107 and C110 each contribute to the Zn(2+) site. The tract at residues 302–315 (TPWIIDGERKMESS) is RNA binding forefinger loop. D342 serves as the catalytic Nucleophile. Residues 440-455 (QKTPLRVLHRRPLAVR) are RNA binding thumb loop.

This sequence belongs to the pseudouridine synthase Pus10 family. Interacts with components of the microprocessor complex DROSHA and DGCR8. Post-translationally, proteolytically cleaved during TRAIL-induced cell death. Cleaved, in vitro, either by caspase-3 (CASP3) or caspase-8 (CASP8).

Its subcellular location is the nucleus. The protein resides in the cytoplasm. It is found in the mitochondrion. It catalyses the reaction uridine(55) in tRNA = pseudouridine(55) in tRNA. The enzyme catalyses uridine(54) in tRNA = pseudouridine(54) in tRNA. Functionally, protein with different functions depending on its subcellular location: involved in miRNA processing in the nucleus and acts as a tRNA pseudouridylate synthase in the cytoplasm. In the cytoplasm, acts as a pseudouridylate synthase by catalyzing synthesis of pseudouridine(54) and pseudouridine(55) from uracil-54 and uracil-55, respectively, in the psi GC loop of a subset of tRNAs. tRNA pseudouridylate synthase activity is enhanced by the presence of 1-methyladenosine at position 53-61 of tRNAs. Does not show tRNA pseudouridylate synthase activity in the nucleus. In the nucleus, promotes primary microRNAs (pri-miRNAs) processing independently of its RNA pseudouridylate synthase activity. Binds pri-miRNAs. Modulator of TRAIL/TNFSF10-induced cell death via activation of procaspase-8 and BID cleavage. Required for the progression of the apoptotic signal through intrinsic mitochondrial cell death. This Mus musculus (Mouse) protein is tRNA pseudouridine synthase Pus10.